Reading from the N-terminus, the 594-residue chain is CDPK-related kinase 4 (594 aa).

The interval 1–131 (MGHCYSRNIS…DSGGGERLDK (131 aa)) is disordered. Glycine 2 carries N-myristoyl glycine lipidation. Polar residues predominate over residues 37 to 58 (IPQSPVASGTPEVNSYNISPFQ). Over residues 116 to 131 (VVDHGGDSGGGERLDK) the composition is skewed to basic and acidic residues. One can recognise a Protein kinase domain in the interval 143-405 (YELGKEVGRG…AAQALAHPWL (263 aa)). ATP contacts are provided by residues 149-157 (VGRGHFGHT) and lysine 175. Aspartate 271 functions as the Proton acceptor in the catalytic mechanism. A Phosphoserine modification is found at serine 311. An autoinhibitory domain region spans residues 409–439 (NPGLLLDFSVYKLVKSYIRASPFRRSALKAL). The segment at 428–448 (ASPFRRSALKALSKAIPDEEL) is calmodulin binding (CaMBD). EF-hand domains lie at 446-481 (EELVFLKAQFMLLDPKDGGLSLNCFTMALTRYATDA), 482-517 (MMESRLPDILNTMQPLAQKKLDFEEFCAAAVSVYQL), 518-557 (EALEEWEQIATSAFEHFEHEGNRIISVQELAGEMSVGPSA), and 558-587 (YPLLKDWIRSSDGKLSFLGYAKFLHGVTVR). Residues aspartate 462, lysine 501, glutamate 506, asparagine 539, glutamate 546, serine 567, aspartate 569, and lysine 571 each coordinate Ca(2+). The residue at position 573 (serine 573) is a Phosphoserine.

This sequence belongs to the protein kinase superfamily. Ser/Thr protein kinase family. CDPK subfamily. In terms of assembly, binds calmodulin (CaM) in a calcium-dependent manner. Autophosphorylated.

Its subcellular location is the cell membrane. The catalysed reaction is L-seryl-[protein] + ATP = O-phospho-L-seryl-[protein] + ADP + H(+). It carries out the reaction L-threonyl-[protein] + ATP = O-phospho-L-threonyl-[protein] + ADP + H(+). Its activity is regulated as follows. Activated by calcium and calmodulin. Autophosphorylation may play an important role in the regulation of the kinase activity. Its function is as follows. May play a role in signal transduction pathways that involve calcium as a second messenger. The sequence is that of CDPK-related kinase 4 (CRK4) from Arabidopsis thaliana (Mouse-ear cress).